The primary structure comprises 365 residues: Probable L-tyrosine/L-aspartate decarboxylase (365 aa).

Lys-225 is subject to N6-(pyridoxal phosphate)lysine.

The protein belongs to the group II decarboxylase family. MfnA subfamily. Pyridoxal 5'-phosphate is required as a cofactor.

The enzyme catalyses L-tyrosine + H(+) = tyramine + CO2. It carries out the reaction L-aspartate + H(+) = beta-alanine + CO2. It functions in the pathway cofactor biosynthesis; methanofuran biosynthesis. Its pathway is cofactor biosynthesis; coenzyme A biosynthesis. In terms of biological role, catalyzes the decarboxylation of L-tyrosine to produce tyramine for methanofuran biosynthesis. Can also catalyze the decarboxylation of L-aspartate to produce beta-alanine for coenzyme A (CoA) biosynthesis. This chain is Probable L-tyrosine/L-aspartate decarboxylase, found in Methanocorpusculum labreanum (strain ATCC 43576 / DSM 4855 / Z).